The sequence spans 490 residues: Dual specificity protein kinase CLK3 (490 aa).

The segment at 1–138 (MHHCKRYRSP…SKRSSRSVED (138 aa)) is disordered. Tyr-7 carries the post-translational modification Phosphotyrosine. 6 positions are modified to phosphoserine: Ser-9, Ser-49, Ser-51, Ser-67, Ser-76, and Ser-78. Composition is skewed to basic and acidic residues over residues 26–56 (YSREHEGRLRYPSRREPPPRRSRSRSHDRLP) and 63–76 (ERRDSDTYRCEERS). Residues 88 to 116 (RSRHRRRSRERGPYRTRKHAHHCHKRRTR) show a composition bias toward basic residues. Residues 117-130 (SCSSASSRSQQSSK) are compositionally biased toward low complexity. Position 135 is a phosphoserine (Ser-135). Residues 156–472 (YEIVGNLGEG…LAEALLHPFF (317 aa)) form the Protein kinase domain. Residues 162–170 (LGEGTFGKV) and Lys-186 contribute to the ATP site. Asp-283 serves as the catalytic Proton acceptor.

This sequence belongs to the protein kinase superfamily. CMGC Ser/Thr protein kinase family. Lammer subfamily. Post-translationally, autophosphorylates on all three types of residues. Endothelial cells.

It is found in the nucleus. It localises to the cytoplasm. The protein resides in the cytoplasmic vesicle. The protein localises to the secretory vesicle. Its subcellular location is the acrosome. It is found in the nucleus speckle. It catalyses the reaction L-seryl-[protein] + ATP = O-phospho-L-seryl-[protein] + ADP + H(+). The catalysed reaction is L-threonyl-[protein] + ATP = O-phospho-L-threonyl-[protein] + ADP + H(+). The enzyme catalyses L-tyrosyl-[protein] + ATP = O-phospho-L-tyrosyl-[protein] + ADP + H(+). With respect to regulation, leucettine L41 inhibits its kinase activity and affects the regulation of alternative splicing mediated by phosphorylation of SR proteins. In terms of biological role, dual specificity kinase acting on both serine/threonine and tyrosine-containing substrates. Phosphorylates serine- and arginine-rich (SR) proteins of the spliceosomal complex. May be a constituent of a network of regulatory mechanisms that enable SR proteins to control RNA splicing and can cause redistribution of SR proteins from speckles to a diffuse nucleoplasmic distribution. Phosphorylates SRSF1 and SRSF3. Regulates the alternative splicing of tissue factor (F3) pre-mRNA in endothelial cells. The polypeptide is Dual specificity protein kinase CLK3 (Homo sapiens (Human)).